Consider the following 1207-residue polypeptide: MVDVNKFESMRIGIASPQKIRYWSFGEVKKPETINYRTQKPEREGLFDERIFGPQKDWECACGKLKGVFYKNQVCELCGVQVTTAKSRRERMGHIELAAPISHIWYFKGIPSRMGLALDMSPRALEEVIYFASYVVIDPKETDLEKKQLLTEREYREQLLKNGFGSFVAKMGAEAIQDLLNDVDIDKEVSELKEELKTVTGQRRVKIIRRLDVLSAFRKSGNALSWMVLNVLPVIPPDLRPMVQLDGGRFATSDLNDLYRRVINRNNRLKRLMELNAPNIIVQNEKRMLQEAVDTLIDNGRRGRPITGAGNRPLKSLSHMLKGKQGRFRQNLLGKRVDYSGRSVIAVGPTLKMYQCGVPREMAIELFKPFVMAQLVKKELAANIRAAKRKVERQDSDVWDVLETVVKEHPVLLNRAPTLHRLGIQAFEPVLIDGKAIRLHPLACEAYNADFDGDQMAIHLPLSEEAQAEARLLMLAAEHILNPKDGKPVVTPSQDMVLGNYYLTMEEKGREGEGMIFATPEEVEIAMRNGYVHLHTRIGIATKSLNKPWTENQKDKILVTTVGKVIFNSIIPEGMPYLNEPTDVNLTTSTDDRFFMDAGQDIKEVLAGIDTVRPFKKGYLGNIIAEVFKRYRTTATSEYLDRLKNLGYHQSTLAGLTVGIADIPVVEDKHKIIDAAHKRVEQITKQFRRGLITDDERYNAVTGVWRDAKEALEKRLIDEQDLTNPIVMMMDSGARGNISNFSQLAGMRGLMAAPNGKIMELPIISNFREGLSVLEMFFSTHGARKGMTDTALKTADSGYLTRRLVDVAQDVIIREDDCGTDRGLVISDIATGKEMVEPLFERLVGRYTRKSVLHPETGEMIIADDTLISEDVARKIIDAGVKEVTIRSVFTCKTPHGVCKHCYGINLATGDAVEVGEAVGTIAAQSIGEPGTQLTMRTFHTGGVASSSDITQGLPRVQEIFEARNPKGEAIITEVTGTVESIVEDPATRTREITVKGKTDTRSYTVGMADVLMVEEGEFIHRGAPLIQGSIEPKHLLQVRDALSVETYLLGEVQKTYRSQGVEIGDKHIEVMVRQMLRKVRVMDNGSTDILPGTLMDISDFEALNETALLNGEMPATGRPVLMGITKASLETNSFLSAASFQETTRVLTDAAIRGKEDHLLGLKENVIIGKIIPAGTGMFRYRNIEPLADLTNAPEVEEVETETVEN.

Residues cysteine 60, cysteine 62, cysteine 75, and cysteine 78 each contribute to the Zn(2+) site. Positions 450, 452, and 454 each coordinate Mg(2+). Zn(2+) contacts are provided by cysteine 818, cysteine 892, cysteine 899, and cysteine 902.

Belongs to the RNA polymerase beta' chain family. The RNAP catalytic core consists of 2 alpha, 1 beta, 1 beta' and 1 omega subunit. When a sigma factor is associated with the core the holoenzyme is formed, which can initiate transcription. Mg(2+) serves as cofactor. It depends on Zn(2+) as a cofactor.

The catalysed reaction is RNA(n) + a ribonucleoside 5'-triphosphate = RNA(n+1) + diphosphate. DNA-dependent RNA polymerase catalyzes the transcription of DNA into RNA using the four ribonucleoside triphosphates as substrates. The polypeptide is DNA-directed RNA polymerase subunit beta' (Lactococcus lactis subsp. lactis (strain IL1403) (Streptococcus lactis)).